Consider the following 219-residue polypeptide: Thymidylate kinase (219 aa).

9–16 (GIEGSGKT) is an ATP binding site.

Belongs to the thymidylate kinase family.

The enzyme catalyses dTMP + ATP = dTDP + ADP. In terms of biological role, phosphorylation of dTMP to form dTDP in both de novo and salvage pathways of dTTP synthesis. This chain is Thymidylate kinase, found in Pelobacter propionicus (strain DSM 2379 / NBRC 103807 / OttBd1).